Reading from the N-terminus, the 72-residue chain is Enterobactin biosynthesis protein YbdZ (72 aa).

This sequence belongs to the MbtH-like family.

Involved in the biosynthesis of the siderophore enterobactin (enterochelin), which is a macrocyclic trimeric lactone of N-(2,3-dihydroxybenzoyl)-serine. Plays a role in the catalytic function of EntF. It is required for adenylation of amino acids in non-ribosomal peptide biosynthesis. The protein is Enterobactin biosynthesis protein YbdZ of Escherichia coli (strain K12).